Consider the following 240-residue polypeptide: Eukaryotic translation initiation factor 3 subunit K (240 aa).

The region spanning 41–221 is the PCI domain; sequence YDKDIVLTIL…TIKTRNIDEK (181 aa).

Belongs to the eIF-3 subunit K family. Component of the eukaryotic translation initiation factor 3 (eIF-3) complex.

Its subcellular location is the cytoplasm. Functionally, component of the eukaryotic translation initiation factor 3 (eIF-3) complex, which is involved in protein synthesis of a specialized repertoire of mRNAs and, together with other initiation factors, stimulates binding of mRNA and methionyl-tRNAi to the 40S ribosome. The eIF-3 complex specifically targets and initiates translation of a subset of mRNAs involved in cell proliferation. The polypeptide is Eukaryotic translation initiation factor 3 subunit K (Caenorhabditis elegans).